Here is a 447-residue protein sequence, read N- to C-terminus: UDP-glycosyltransferase 76B1 (447 aa).

UDP-alpha-D-glucose contacts are provided by residues serine 269, 327-328 (WA), 345-353 (HCGWNSTLE), and 367-370 (FGDQ).

The protein belongs to the UDP-glycosyltransferase family. As to expression, expressed in roots, leaves, hydathodes, sepals and style.

Functionally, glycosylates the amino acid-related molecules isoleucic acid (2-hydroxy-3-methylpentanoic acid) and valic acid (2-hydroxy-3-methylbutyric acid). Acts as a negative regulator of salicylic acid (SA)-dependent plant defense in the absence of pathogens and promotes the jasmonate (JA) response. Negatively influences the onset of senescence. This chain is UDP-glycosyltransferase 76B1, found in Arabidopsis thaliana (Mouse-ear cress).